The following is a 57-amino-acid chain: DNA gyrase inhibitor YacG (57 aa).

The Zn(2+) site is built by Cys10, Cys13, Cys25, and Cys29.

It belongs to the DNA gyrase inhibitor YacG family. Interacts with GyrB. Requires Zn(2+) as cofactor.

Functionally, inhibits all the catalytic activities of DNA gyrase by preventing its interaction with DNA. Acts by binding directly to the C-terminal domain of GyrB, which probably disrupts DNA binding by the gyrase. In Brucella melitensis biotype 1 (strain ATCC 23456 / CCUG 17765 / NCTC 10094 / 16M), this protein is DNA gyrase inhibitor YacG.